Here is a 435-residue protein sequence, read N- to C-terminus: tRNA-2-methylthio-N(6)-dimethylallyladenosine synthase (435 aa).

The 116-residue stretch at 2-117 folds into the MTTase N-terminal domain; the sequence is KKASIITYGC…IPQAIEKIEN (116 aa). 6 residues coordinate [4Fe-4S] cluster: C11, C47, C80, C154, C158, and C161. Residues 140-370 form the Radical SAM core domain; sequence FGSDQTASIS…MEVQNKCSFY (231 aa). A TRAM domain is found at 373-435; sequence SKYKGRIVKV…KTWTLYGEIV (63 aa).

This sequence belongs to the methylthiotransferase family. MiaB subfamily. Monomer. Requires [4Fe-4S] cluster as cofactor.

It is found in the cytoplasm. It catalyses the reaction N(6)-dimethylallyladenosine(37) in tRNA + (sulfur carrier)-SH + AH2 + 2 S-adenosyl-L-methionine = 2-methylsulfanyl-N(6)-dimethylallyladenosine(37) in tRNA + (sulfur carrier)-H + 5'-deoxyadenosine + L-methionine + A + S-adenosyl-L-homocysteine + 2 H(+). Functionally, catalyzes the methylthiolation of N6-(dimethylallyl)adenosine (i(6)A), leading to the formation of 2-methylthio-N6-(dimethylallyl)adenosine (ms(2)i(6)A) at position 37 in tRNAs that read codons beginning with uridine. The protein is tRNA-2-methylthio-N(6)-dimethylallyladenosine synthase of Fusobacterium nucleatum subsp. nucleatum (strain ATCC 25586 / DSM 15643 / BCRC 10681 / CIP 101130 / JCM 8532 / KCTC 2640 / LMG 13131 / VPI 4355).